The following is a 125-amino-acid chain: Inner membrane protein YbaN (125 aa).

At 1-6 (MQRIIL) the chain is on the cytoplasmic side. Residues 7 to 26 (IIIGWLAVVLGTLGVVLPVL) form a helical membrane-spanning segment. The Periplasmic portion of the chain corresponds to 27-45 (PTTPFILLAAWCFARSSPR). A helical transmembrane segment spans residues 46 to 63 (FHAWLLYRSWFGSYLRFW). The Cytoplasmic portion of the chain corresponds to 64–74 (QKHHAMPRGVK). A helical transmembrane segment spans residues 75–92 (PRAILLILLTFAISLWFV). At 93-95 (QMP) the chain is on the periplasmic side. A helical membrane pass occupies residues 96–118 (WVRIMLLVILACLLFYMWRIPVI). Topologically, residues 119 to 125 (DEKQEKH) are cytoplasmic.

The protein resides in the cell inner membrane. This chain is Inner membrane protein YbaN (ybaN), found in Escherichia coli O157:H7.